The chain runs to 61 residues: Large ribosomal subunit protein bL32 (61 aa).

A disordered region spans residues 1–20; sequence MAVQKSKPSRAKRGKRRSHD. Over residues 7 to 19 the composition is skewed to basic residues; sequence KPSRAKRGKRRSH.

It belongs to the bacterial ribosomal protein bL32 family.

In Buchnera aphidicola subsp. Cinara cedri (strain Cc), this protein is Large ribosomal subunit protein bL32.